Here is a 224-residue protein sequence, read N- to C-terminus: Agamous-like MADS-box protein AGL9 homolog (224 aa).

One can recognise an MADS-box domain in the interval 3-57 (RGRVELKRIEGKINRQVTFAKRRNGLLKKAYELSVLCDAEVALIIFSNRGKLYEF). In terms of domain architecture, K-box spans 89–179 (EISSQQEYLK…KQRLMEGSQL (91 aa)).

Flower specific.

Its subcellular location is the nucleus. In terms of biological role, probable transcription factor active in inflorescence development and floral organogenesis. This Solanum lycopersicum (Tomato) protein is Agamous-like MADS-box protein AGL9 homolog (TDR5).